The following is a 253-amino-acid chain: Protein C1orf43 (253 aa).

The chain crosses the membrane as a helical span at residues 11 to 31 (VNVVLVMAYGSLVFVLLFIFV).

It localises to the membrane. The protein resides in the golgi apparatus. The protein localises to the mitochondrion. Functionally, general regulator of phagocytosis. Required to uptake Gram negative bacterium by macrophages. The sequence is that of Protein C1orf43 (C1orf43) from Homo sapiens (Human).